A 462-amino-acid polypeptide reads, in one-letter code: Arginine biosynthesis bifunctional protein ArgJ, mitochondrial (462 aa).

Substrate-binding residues include T189, K215, T236, E327, N457, and S462. T236 acts as the Nucleophile in catalysis.

Belongs to the ArgJ family. In terms of assembly, heterodimer of an alpha and a beta chain. Post-translationally, the alpha and beta chains are autoproteolytically processed from a single precursor protein within the mitochondrion.

The protein resides in the mitochondrion matrix. It carries out the reaction N(2)-acetyl-L-ornithine + L-glutamate = N-acetyl-L-glutamate + L-ornithine. The catalysed reaction is L-glutamate + acetyl-CoA = N-acetyl-L-glutamate + CoA + H(+). Its pathway is amino-acid biosynthesis; L-arginine biosynthesis; L-ornithine and N-acetyl-L-glutamate from L-glutamate and N(2)-acetyl-L-ornithine (cyclic): step 1/1. The protein operates within amino-acid biosynthesis; L-arginine biosynthesis; N(2)-acetyl-L-ornithine from L-glutamate: step 1/4. In terms of biological role, catalyzes two activities which are involved in the cyclic version of arginine biosynthesis: the synthesis of acetylglutamate from glutamate and acetyl-CoA, and of ornithine by transacetylation between acetylornithine and glutamate. The chain is Arginine biosynthesis bifunctional protein ArgJ, mitochondrial from Postia placenta (strain ATCC 44394 / Madison 698-R) (Brown rot fungus).